Consider the following 362-residue polypeptide: Metacaspase-3 (362 aa).

Active-site residues include H174 and C230.

It belongs to the peptidase C14B family.

The sequence is that of Metacaspase-3 (AMC3) from Arabidopsis thaliana (Mouse-ear cress).